The sequence spans 148 residues: uncharacterized protein (148 aa).

An N-terminal signal peptide occupies residues 1-18 (MKIILTVLAGVGLLSAGG). Residue Cys19 is the site of N-palmitoyl cysteine attachment. Cys19 carries S-diacylglycerol cysteine lipidation.

It localises to the cell membrane. This is an uncharacterized protein from Bacillus subtilis (strain 168).